Consider the following 164-residue polypeptide: Large ribosomal subunit protein uL15 (164 aa).

Residues 1–33 (MTSKKRRQRGSRTHGGGTHKNRRGAGHRGGRGR) show a composition bias toward basic residues. 2 disordered regions span residues 1 to 59 (MTSK…PGAE) and 137 to 164 (AGGS…NDEN). Over residues 34–43 (AGRDKHEQHN) the composition is skewed to basic and acidic residues. Residues 153-164 (GEDEEPNSNDEN) are compositionally biased toward acidic residues.

It belongs to the universal ribosomal protein uL15 family. As to quaternary structure, part of the 50S ribosomal subunit.

Functionally, binds to the 23S rRNA. The chain is Large ribosomal subunit protein uL15 from Haloquadratum walsbyi (strain DSM 16790 / HBSQ001).